The following is a 528-amino-acid chain: Abrin-a (528 aa).

Pyrrolidone carboxylic acid is present on Gln1. Glu164 is an active-site residue. Intrachain disulfides connect Cys247–Cys269, Cys286–Cys305, and Cys329–Cys346. A Ricin B-type lectin 1 domain is found at 273–400 (YEPTVRIGGR…YLMRQGWRTG (128 aa)). The stretch at 283-325 (DGMCVDVYDNGYHNGNRIIMWKCKDRLEENQLWTLKSDKTIRS) is one 1-alpha repeat. Residues 326 to 366 (NGKCLTTYGYAPGSYVMIYDCTSAVAEATYWEIWDNGTIIN) form a 1-beta repeat. N-linked (GlcNAc...) asparagine glycans are attached at residues Asn361 and Asn401. The 1-gamma repeat unit spans residues 369-401 (SALVLSAESSSMGGTLTVQTNEYLMRQGWRTGN). Residues 403–527 (TSPFVTSISG…GKPNQIWLTL (125 aa)) form the Ricin B-type lectin 2 domain. The stretch at 414–449 (SDLCMQAQGSNVWMADCDSNKKEQQWALYTDGSIRS) is one 2-alpha repeat. Cystine bridges form between Cys417–Cys430 and Cys456–Cys473. The 2-beta repeat unit spans residues 453-492 (TNNCLTSKDHKQGSTILLMGCSNGWASQRWVFKNDGSIYS). The 2-gamma repeat unit spans residues 495-528 (DDMVMDVKGSDPSLKQIILWPYTGKPNQIWLTLF).

This sequence in the N-terminal section; belongs to the ribosome-inactivating protein family. Type 2 RIP subfamily. As to quaternary structure, disulfide-linked dimer of A and B chains.

It carries out the reaction Endohydrolysis of the N-glycosidic bond at one specific adenosine on the 28S rRNA.. Its function is as follows. The A chain is responsible for inhibiting protein synthesis through the catalytic inactivation of 60S ribosomal subunits by removing adenine from position 4,324 of 28S rRNA. Abrin-a is more toxic than ricin. Functionally, the B chain is a galactose-specific lectin that facilitates the binding of abrin to the cell membrane that precedes endocytosis. The sequence is that of Abrin-a from Abrus precatorius (Indian licorice).